The sequence spans 347 residues: NADH-ubiquinone oxidoreductase chain 2 (347 aa).

Transmembrane regions (helical) follow at residues 3 to 23 (PPIL…VLTS), 25 to 45 (HWML…PILM), 59 to 79 (YFLM…INLL), 96 to 116 (TLMT…FWVP), 122 to 142 (ISLS…LSVL), 153 to 173 (LLLL…LNQT), 178 to 198 (ILAY…IYNP), 200 to 220 (MMLL…MLFM), 237 to 257 (MPLI…LPPL), 274 to 294 (EMII…YFYM), and 325 to 345 (FLPP…IISI).

The protein belongs to the complex I subunit 2 family. Core subunit of respiratory chain NADH dehydrogenase (Complex I) which is composed of 45 different subunits. Interacts with TMEM242.

It is found in the mitochondrion inner membrane. It carries out the reaction a ubiquinone + NADH + 5 H(+)(in) = a ubiquinol + NAD(+) + 4 H(+)(out). In terms of biological role, core subunit of the mitochondrial membrane respiratory chain NADH dehydrogenase (Complex I) which catalyzes electron transfer from NADH through the respiratory chain, using ubiquinone as an electron acceptor. Essential for the catalytic activity and assembly of complex I. This Paradoxurus hermaphroditus (Asian palm civet) protein is NADH-ubiquinone oxidoreductase chain 2.